The following is a 235-amino-acid chain: Ribonuclease 3 (235 aa).

One can recognise an RNase III domain in the interval 6–131 (IDQLEKLTGH…LIAVIYLDGG (126 aa)). E44 serves as a coordination point for Mg(2+). D48 is a catalytic residue. Mg(2+) contacts are provided by D117 and E120. Residue E120 is part of the active site. The DRBM domain occupies 156–225 (DAKTQLQEWA…AEKILRREGI (70 aa)).

It belongs to the ribonuclease III family. As to quaternary structure, homodimer. Requires Mg(2+) as cofactor.

Its subcellular location is the cytoplasm. The enzyme catalyses Endonucleolytic cleavage to 5'-phosphomonoester.. In terms of biological role, digests double-stranded RNA. Involved in the processing of primary rRNA transcript to yield the immediate precursors to the large and small rRNAs (23S and 16S). Processes some mRNAs, and tRNAs when they are encoded in the rRNA operon. Processes pre-crRNA and tracrRNA of type II CRISPR loci if present in the organism. This is Ribonuclease 3 from Bartonella henselae (strain ATCC 49882 / DSM 28221 / CCUG 30454 / Houston 1) (Rochalimaea henselae).